Here is a 465-residue protein sequence, read N- to C-terminus: Poly(A) polymerase I (465 aa).

Active-site residues include D80, D82, and D162. Residues 430–465 (APPEQKGMLNELDDDPAPRRRRSRPRKRAPRREGTV) form a disordered region. Positions 448–459 (RRRRSRPRKRAP) are enriched in basic residues.

It belongs to the tRNA nucleotidyltransferase/poly(A) polymerase family.

The catalysed reaction is RNA(n) + ATP = RNA(n)-3'-adenine ribonucleotide + diphosphate. Functionally, adds poly(A) tail to the 3' end of many RNAs, which usually targets these RNAs for decay. Plays a significant role in the global control of gene expression, through influencing the rate of transcript degradation, and in the general RNA quality control. This chain is Poly(A) polymerase I, found in Salmonella typhimurium (strain LT2 / SGSC1412 / ATCC 700720).